Consider the following 294-residue polypeptide: Cytidine deaminase (294 aa).

CMP/dCMP-type deaminase domains are found at residues 48–168 (DEDA…FGPK) and 186–294 (VSGD…VLLG). 89–91 (NME) is a substrate binding site. H102 contributes to the Zn(2+) binding site. E104 acts as the Proton donor in catalysis. C129 and C132 together coordinate Zn(2+).

It belongs to the cytidine and deoxycytidylate deaminase family. Homodimer. Requires Zn(2+) as cofactor.

It carries out the reaction cytidine + H2O + H(+) = uridine + NH4(+). The catalysed reaction is 2'-deoxycytidine + H2O + H(+) = 2'-deoxyuridine + NH4(+). Its function is as follows. This enzyme scavenges exogenous and endogenous cytidine and 2'-deoxycytidine for UMP synthesis. The chain is Cytidine deaminase from Klebsiella pneumoniae (strain 342).